The primary structure comprises 89 residues: UPF0297 protein SUB1776 (89 aa).

This sequence belongs to the UPF0297 family.

This is UPF0297 protein SUB1776 from Streptococcus uberis (strain ATCC BAA-854 / 0140J).